The chain runs to 295 residues: Bifunctional protein FolD (295 aa).

NADP(+)-binding positions include 166–168 (GRS), S191, and I232.

This sequence belongs to the tetrahydrofolate dehydrogenase/cyclohydrolase family. In terms of assembly, homodimer.

The catalysed reaction is (6R)-5,10-methylene-5,6,7,8-tetrahydrofolate + NADP(+) = (6R)-5,10-methenyltetrahydrofolate + NADPH. The enzyme catalyses (6R)-5,10-methenyltetrahydrofolate + H2O = (6R)-10-formyltetrahydrofolate + H(+). The protein operates within one-carbon metabolism; tetrahydrofolate interconversion. Its function is as follows. Catalyzes the oxidation of 5,10-methylenetetrahydrofolate to 5,10-methenyltetrahydrofolate and then the hydrolysis of 5,10-methenyltetrahydrofolate to 10-formyltetrahydrofolate. In Wolbachia pipientis subsp. Culex pipiens (strain wPip), this protein is Bifunctional protein FolD.